A 218-amino-acid polypeptide reads, in one-letter code: Elongation factor Ts (218 aa).

The segment at 82 to 85 (TDFV) is involved in Mg(2+) ion dislocation from EF-Tu.

It belongs to the EF-Ts family.

The protein resides in the cytoplasm. Associates with the EF-Tu.GDP complex and induces the exchange of GDP to GTP. It remains bound to the aminoacyl-tRNA.EF-Tu.GTP complex up to the GTP hydrolysis stage on the ribosome. The polypeptide is Elongation factor Ts (Prochlorococcus marinus (strain NATL1A)).